We begin with the raw amino-acid sequence, 465 residues long: Cytochrome P450 85A1 (465 aa).

Residues 2 to 22 (GAMMVMMGLLLIIVSLCSALL) form a helical membrane-spanning segment. Cys-415 provides a ligand contact to heme.

The protein belongs to the cytochrome P450 family. Heme serves as cofactor. Mainly expressed in apical shoots, hypocotyls, siliques and roots. Also present in the female gametophyte.

The protein localises to the membrane. The catalysed reaction is 6-deoxoteasterone + reduced [NADPH--hemoprotein reductase] + O2 = 6alpha-hydroxyteasterone + oxidized [NADPH--hemoprotein reductase] + H2O + H(+). The enzyme catalyses 6alpha-hydroxytyphasterol + reduced [NADPH--hemoprotein reductase] + O2 = teasterone + oxidized [NADPH--hemoprotein reductase] + 2 H2O + H(+). It catalyses the reaction 3-dehydro-6-deoxoteasterone + reduced [NADPH--hemoprotein reductase] + O2 = 3-dehydro-6alpha-hydroxyteasterone + oxidized [NADPH--hemoprotein reductase] + H2O + H(+). It carries out the reaction 3-dehydro-6alpha-hydroxyteasterone + reduced [NADPH--hemoprotein reductase] + O2 = 3-dehydroteasterone + oxidized [NADPH--hemoprotein reductase] + 2 H2O + H(+). The catalysed reaction is 6-deoxotyphasterol + reduced [NADPH--hemoprotein reductase] + O2 = 6alpha-hydroxytyphasterol + oxidized [NADPH--hemoprotein reductase] + H2O + H(+). The enzyme catalyses 6alpha-hydroxytyphasterol + reduced [NADPH--hemoprotein reductase] + O2 = typhasterol + oxidized [NADPH--hemoprotein reductase] + 2 H2O + H(+). It catalyses the reaction 6-deoxocastasterone + reduced [NADPH--hemoprotein reductase] + O2 = 6alpha-hydroxycastasterone + oxidized [NADPH--hemoprotein reductase] + H2O + H(+). It carries out the reaction 6alpha-hydroxycastasterone + reduced [NADPH--hemoprotein reductase] + O2 = castasterone + oxidized [NADPH--hemoprotein reductase] + 2 H2O + H(+). The catalysed reaction is 6-deoxocastasterone + 2 reduced [NADPH--hemoprotein reductase] + 2 O2 = castasterone + 2 oxidized [NADPH--hemoprotein reductase] + 3 H2O + 2 H(+). The enzyme catalyses 6-deoxoteasterone + 2 reduced [NADPH--hemoprotein reductase] + 2 O2 = teasterone + 2 oxidized [NADPH--hemoprotein reductase] + 3 H2O + 2 H(+). It catalyses the reaction 6-deoxotyphasterol + 2 reduced [NADPH--hemoprotein reductase] + 2 O2 = typhasterol + 2 oxidized [NADPH--hemoprotein reductase] + 3 H2O + 2 H(+). It carries out the reaction 3-dehydro-6-deoxoteasterone + 2 reduced [NADPH--hemoprotein reductase] + 2 O2 = 3-dehydroteasterone + 2 oxidized [NADPH--hemoprotein reductase] + 3 H2O + 2 H(+). It functions in the pathway plant hormone biosynthesis; brassinosteroid biosynthesis. Functionally, catalyzes the C6-oxidation step in brassinosteroids biosynthesis. Converts 6-deoxocastasterone (6-deoxoCS) to castasterone (CS). May also convert 6-deoxoteasterone (6-deoxoTE) to teasterone (TE), 3-dehydro-6-deoxoteasterone (6-deoxo3DT, 6-deoxo-3-DHT) to 3-dehydroteasterone (3DT, 3-DHT), and 6-deoxotyphasterol (6-deoxoTY) to typhasterol (TY). Required for the initiation of female gametogenesis (megagametogenesis). The protein is Cytochrome P450 85A1 of Arabidopsis thaliana (Mouse-ear cress).